Here is a 471-residue protein sequence, read N- to C-terminus: Threonine--tRNA ligase catalytic subunit (471 aa).

Positions 8–333 (THIDYAYELD…YLEHRRGRMP (326 aa)) are catalytic. Residues Cys112, His166, and His310 each contribute to the Zn(2+) site.

This sequence belongs to the class-II aminoacyl-tRNA synthetase family. As to quaternary structure, homodimer. Probably interacts with its editing subunit. The cofactor is Zn(2+).

It is found in the cytoplasm. It carries out the reaction tRNA(Thr) + L-threonine + ATP = L-threonyl-tRNA(Thr) + AMP + diphosphate + H(+). In terms of biological role, catalyzes the attachment of threonine to tRNA(Thr) in a two-step reaction: L-threonine is first activated by ATP to form Thr-AMP and then transferred to the acceptor end of tRNA(Thr). This protein is probably not able to deacylate mischarged L-seryl-tRNA(Thr) as it lacks the appropriate domain. This is Threonine--tRNA ligase catalytic subunit from Aeropyrum pernix (strain ATCC 700893 / DSM 11879 / JCM 9820 / NBRC 100138 / K1).